A 167-amino-acid polypeptide reads, in one-letter code: Protein-export protein SecB (167 aa).

Belongs to the SecB family. As to quaternary structure, homotetramer, a dimer of dimers. One homotetramer interacts with 1 SecA dimer.

The protein localises to the cytoplasm. Functionally, one of the proteins required for the normal export of preproteins out of the cell cytoplasm. It is a molecular chaperone that binds to a subset of precursor proteins, maintaining them in a translocation-competent state. It also specifically binds to its receptor SecA. The polypeptide is Protein-export protein SecB (Wolbachia sp. subsp. Brugia malayi (strain TRS)).